Consider the following 251-residue polypeptide: Uridylate kinase (251 aa).

Position 24–27 (24–27) interacts with ATP; it reads KISG. The involved in allosteric activation by GTP stretch occupies residues 32-37; the sequence is GDQGFG. Gly-66 provides a ligand contact to UMP. The ATP site is built by Gly-67 and Arg-71. Residues Asp-86 and 147–154 contribute to the UMP site; that span reads TGNPYFTT. Positions 175, 181, and 184 each coordinate ATP.

Belongs to the UMP kinase family. As to quaternary structure, homohexamer.

The protein resides in the cytoplasm. The enzyme catalyses UMP + ATP = UDP + ADP. Its pathway is pyrimidine metabolism; CTP biosynthesis via de novo pathway; UDP from UMP (UMPK route): step 1/1. Allosterically activated by GTP. Inhibited by UTP. Functionally, catalyzes the reversible phosphorylation of UMP to UDP. This chain is Uridylate kinase, found in Ruegeria pomeroyi (strain ATCC 700808 / DSM 15171 / DSS-3) (Silicibacter pomeroyi).